The primary structure comprises 174 residues: Gamma-crystallin D (174 aa).

Beta/gamma crystallin 'Greek key' domains lie at 2–40 and 41–83; these read GKIT…RVDS and GCWM…RLIP. The segment at 84 to 87 is connecting peptide; sequence HAGS. Beta/gamma crystallin 'Greek key' domains lie at 88–128 and 129–171; these read HRLR…NVLE and GSWV…RRVI.

Belongs to the beta/gamma-crystallin family.

Functionally, crystallins are the dominant structural components of the vertebrate eye lens. The protein is Gamma-crystallin D (CRYGD) of Bos taurus (Bovine).